The primary structure comprises 314 residues: Aspartate carbamoyltransferase catalytic subunit (314 aa).

Carbamoyl phosphate contacts are provided by R63 and T64. L-aspartate is bound at residue K91. Positions 113, 143, and 146 each coordinate carbamoyl phosphate. Residues R176 and R228 each coordinate L-aspartate. Residues A269 and P270 each coordinate carbamoyl phosphate.

This sequence belongs to the aspartate/ornithine carbamoyltransferase superfamily. ATCase family. As to quaternary structure, heterododecamer (2C3:3R2) of six catalytic PyrB chains organized as two trimers (C3), and six regulatory PyrI chains organized as three dimers (R2).

The catalysed reaction is carbamoyl phosphate + L-aspartate = N-carbamoyl-L-aspartate + phosphate + H(+). It functions in the pathway pyrimidine metabolism; UMP biosynthesis via de novo pathway; (S)-dihydroorotate from bicarbonate: step 2/3. Its function is as follows. Catalyzes the condensation of carbamoyl phosphate and aspartate to form carbamoyl aspartate and inorganic phosphate, the committed step in the de novo pyrimidine nucleotide biosynthesis pathway. The protein is Aspartate carbamoyltransferase catalytic subunit of Cutibacterium acnes (strain DSM 16379 / KPA171202) (Propionibacterium acnes).